Consider the following 434-residue polypeptide: Probable G-protein coupled receptor B0563.6 (434 aa).

A glycan (N-linked (GlcNAc...) asparagine) is linked at Asn-12. 2 consecutive transmembrane segments (helical) span residues 30–50 (VLPC…MVLA) and 65–85 (LAVA…TEYL). Residue Asn-88 is glycosylated (N-linked (GlcNAc...) asparagine). A run of 2 helical transmembrane segments spans residues 105–125 (LMLT…VALS) and 147–167 (ATRA…PYAI). An N-linked (GlcNAc...) asparagine glycan is attached at Asn-181. Helical transmembrane passes span 208–228 (ILRF…MIAF) and 258–278 (GGTV…LLLI). N-linked (GlcNAc...) asparagine glycosylation is found at Asn-429 and Asn-430.

This sequence belongs to the G-protein coupled receptor 1 family.

Its subcellular location is the cell membrane. Not known. Putative receptor. This Caenorhabditis elegans protein is Probable G-protein coupled receptor B0563.6.